A 125-amino-acid chain; its full sequence is Neuraminyllactose-binding hemagglutinin (125 aa).

An N-acetyl-neuraminyl-alpha(2,3)-lactose binding motif region spans residues lysine 92–lysine 97.

It localises to the cell outer membrane. The sequence is that of Neuraminyllactose-binding hemagglutinin (hpaA) from Helicobacter pylori (Campylobacter pylori).